The sequence spans 624 residues: Matrilin-4 (624 aa).

An N-terminal signal peptide occupies residues 1 to 21; it reads MRGPCCWPLSLLLLFLQSWET. The region spanning 36 to 215 is the VWFA 1 domain; the sequence is DLVFMIDSSR…EFGLQFQGRL (180 aa). Residue asparagine 71 is glycosylated (N-linked (GlcNAc...) asparagine). EGF-like domains are found at residues 217–257, 258–298, 299–339, and 340–380; these read GKDL…KNCL, ALDL…RSCR, AIDY…RSCR, and VRDF…KSCD. Cystine bridges form between cysteine 221-cysteine 232, cysteine 228-cysteine 241, cysteine 243-cysteine 256, cysteine 262-cysteine 273, cysteine 269-cysteine 282, cysteine 284-cysteine 297, cysteine 303-cysteine 314, cysteine 310-cysteine 323, cysteine 325-cysteine 338, cysteine 344-cysteine 355, cysteine 351-cysteine 364, and cysteine 366-cysteine 379. An N-linked (GlcNAc...) asparagine glycan is attached at asparagine 307. Positions 388-563 constitute a VWFA 2 domain; the sequence is DLVLLVDGSK…STMTHLLENL (176 aa). Residues 590–623 are a coiled coil; sequence EFQGRTLGALESLTQNLARLTERLEELENQLASR.

As to quaternary structure, interacts with COMP. In terms of tissue distribution, lung, brain, sternum, kidney and heart.

It is found in the secreted. Functionally, major component of the extracellular matrix of cartilage. The chain is Matrilin-4 (Matn4) from Mus musculus (Mouse).